The sequence spans 1303 residues: D-lysergyl-peptide-synthetase subunit 2 (1303 aa).

The tract at residues 256 to 653 is adenylation (A) domain; it reads EWCRWTPSAV…CRKSTQVKLR (398 aa). The Carrier domain maps to 793–869; the sequence is APSNDIEEAF…ELARHTKLVA (77 aa). The residue at position 830 (serine 830) is an O-(pantetheine 4'-phosphoryl)serine. The condensation (C) domain stretch occupies residues 905 to 1294; the sequence is EDVYPCTPLQ…HAAPRTLIGD (390 aa).

This sequence belongs to the NRP synthetase family.

The protein operates within alkaloid biosynthesis; ergot alkaloid biosynthesis. In terms of biological role, D-lysergyl-peptide-synthetase subunit 2; part of the gene cluster that mediates the biosynthesis of fungal ergot alkaloid. DmaW catalyzes the first step of ergot alkaloid biosynthesis by condensing dimethylallyl diphosphate (DMAP) and tryptophan to form 4-dimethylallyl-L-tryptophan. The second step is catalyzed by the methyltransferase easF that methylates 4-dimethylallyl-L-tryptophan in the presence of S-adenosyl-L-methionine, resulting in the formation of 4-dimethylallyl-L-abrine. The catalase easC and the FAD-dependent oxidoreductase easE then transform 4-dimethylallyl-L-abrine to chanoclavine-I which is further oxidized by easD in the presence of NAD(+), resulting in the formation of chanoclavine-I aldehyde. Agroclavine dehydrogenase easG then mediates the conversion of chanoclavine-I aldehyde to agroclavine via a non-enzymatic adduct reaction: the substrate is an iminium intermediate that is formed spontaneously from chanoclavine-I aldehyde in the presence of glutathione. The presence of easA is not required to complete this reaction. Further conversion of agroclavine to paspalic acid is a two-step process involving oxidation of agroclavine to elymoclavine and of elymoclavine to paspalic acid, the second step being performed by the elymoclavine oxidase cloA. Paspalic acid is then further converted to D-lysergic acid. Ergopeptines are assembled from D-lysergic acid and three different amino acids by the D-lysergyl-peptide-synthetases composed each of a monomudular and a trimodular nonribosomal peptide synthetase subunit. LpsB and lpsC encode the monomodular subunits responsible for D-lysergic acid activation and incorporation into the ergopeptine backbone. LpsA1 and A2 subunits encode the trimodular nonribosomal peptide synthetase assembling the tripeptide portion of ergopeptines. LpsA1 is responsible for formation of the major ergopeptine, ergotamine, and lpsA2 for alpha-ergocryptine, the minor ergopeptine of the total alkaloid mixture elaborated by C.purpurea. D-lysergyl-tripeptides are assembled by the nonribosomal peptide synthetases and released as N-(D-lysergyl-aminoacyl)-lactams. Cyclolization of the D-lysergyl-tripeptides is performed by the Fe(2+)/2-ketoglutarate-dependent dioxygenase easH which introduces a hydroxyl group into N-(D-lysergyl-aminoacyl)-lactam at alpha-C of the aminoacyl residue followed by spontaneous condensation with the terminal lactam carbonyl group. This chain is D-lysergyl-peptide-synthetase subunit 2, found in Claviceps purpurea (strain 20.1) (Ergot fungus).